The chain runs to 215 residues: Outer-membrane lipoprotein carrier protein (215 aa).

Residues 1-24 (MFVLKARHLMAAGLVSLAAWSAGA) form the signal peptide.

Belongs to the LolA family. Monomer.

It localises to the periplasm. Participates in the translocation of lipoproteins from the inner membrane to the outer membrane. Only forms a complex with a lipoprotein if the residue after the N-terminal Cys is not an aspartate (The Asp acts as a targeting signal to indicate that the lipoprotein should stay in the inner membrane). This chain is Outer-membrane lipoprotein carrier protein, found in Ralstonia nicotianae (strain ATCC BAA-1114 / GMI1000) (Ralstonia solanacearum).